We begin with the raw amino-acid sequence, 213 residues long: Pyrrolidone-carboxylate peptidase (213 aa).

Residues E78, C141, and H165 contribute to the active site.

This sequence belongs to the peptidase C15 family. Homotetramer.

Its subcellular location is the cytoplasm. It carries out the reaction Release of an N-terminal pyroglutamyl group from a polypeptide, the second amino acid generally not being Pro.. Functionally, removes 5-oxoproline from various penultimate amino acid residues except L-proline. This is Pyrrolidone-carboxylate peptidase from Staphylococcus carnosus (strain TM300).